We begin with the raw amino-acid sequence, 116 residues long: Transcriptional regulator WhiB4 (116 aa).

The 4Fe-4S Wbl-type domain maps to 36 to 92 (LCRATDPDELFVRGAAQRKAAVICRHCPVMQECGADALDNKVEFGVWGGMTERQRRA). The [4Fe-4S] cluster site is built by C37, C59, C62, and C68.

It belongs to the WhiB family. It depends on [4Fe-4S] cluster as a cofactor. In terms of processing, the Fe-S cluster can be nitrosylated by nitric oxide (NO). Post-translationally, upon Fe-S cluster removal intramolecular disulfide bonds are formed.

The protein resides in the cytoplasm. In terms of biological role, acts as a transcriptional regulator. Probably redox-responsive. The apo- but not holo-form probably binds DNA. Plays a role in lipooligosaccharide (LOS) biosynthesis by regulating LOS gene expression. In Mycobacterium marinum (strain ATCC BAA-535 / M), this protein is Transcriptional regulator WhiB4 (whiB4).